We begin with the raw amino-acid sequence, 89 residues long: Acylphosphatase (89 aa).

Positions 3–89 constitute an Acylphosphatase-like domain; sequence CKRWILYGRV…GNYGSFHIEY (87 aa). Active-site residues include arginine 18 and asparagine 36.

It belongs to the acylphosphatase family.

The catalysed reaction is an acyl phosphate + H2O = a carboxylate + phosphate + H(+). This chain is Acylphosphatase (acyP), found in Petrotoga mobilis (strain DSM 10674 / SJ95).